The primary structure comprises 633 residues: Breast carcinoma-amplified sequence 1 homolog (633 aa).

Disordered stretches follow at residues 1 to 34 and 57 to 422; these read MGNQ…CVQN and SSKD…KLFW. Polar residues-rich tracts occupy residues 24-34 and 57-68; these read KVTSDNECVQN and SSKDNVATSSPK. Ser127 is subject to Phosphoserine. Polar residues predominate over residues 278–288; sequence VDTTENSSSIM. A compositionally biased stretch (basic and acidic residues) spans 300-318; sequence TETKKDPEDTKATKADSVC. Ser328 carries the post-translational modification Phosphoserine. Position 330 is a phosphothreonine (Thr330). The span at 359–378 shows a compositional bias: polar residues; that stretch reads NSPTTSANLKSDKANFTPQE. Ser360 carries the phosphoserine modification. Residues 400-410 are compositionally biased toward basic and acidic residues; that stretch reads SEGRDSGKEKA. 2 positions are modified to phosphoserine: Ser425 and Ser443. Positions 454-633 are disordered; it reads ESSLQTVDLS…VSIGPVGKSK (180 aa). Residues 471 to 481 are compositionally biased toward basic and acidic residues; the sequence is TDVKVKEESKP. Residues 510 to 522 show a composition bias toward polar residues; that stretch reads KDSSCQTSNSVEK. Thr523 bears the Phosphothreonine mark. Phosphoserine is present on Ser525. Residues 537–555 show a composition bias toward basic and acidic residues; that stretch reads KNKETSSSKDKKSVDKKSA. Residues Ser601 and Ser615 each carry the phosphoserine modification. Positions 614 to 633 are interacts with DYNLL1 AND DYNLL2; sequence MSDAQVQTDPVSIGPVGKSK.

As to quaternary structure, homodimer. Interacts with DYNLL1 and DYNLL2. As to expression, highly expressed in the brain and, more specifically, in oligodendrocytes. Expressed in the Schwann cells (at protein level).

It localises to the cytoplasm. In terms of biological role, required for myelination. This Mus musculus (Mouse) protein is Breast carcinoma-amplified sequence 1 homolog (Bcas1).